A 131-amino-acid polypeptide reads, in one-letter code: Phosphoribosyl-AMP cyclohydrolase (131 aa).

Asp82 contacts Mg(2+). Cys83 is a binding site for Zn(2+). Residues Asp84 and Asp86 each contribute to the Mg(2+) site. The Zn(2+) site is built by Cys99 and Cys106.

Belongs to the PRA-CH family. In terms of assembly, homodimer. It depends on Mg(2+) as a cofactor. The cofactor is Zn(2+).

It localises to the cytoplasm. The catalysed reaction is 1-(5-phospho-beta-D-ribosyl)-5'-AMP + H2O = 1-(5-phospho-beta-D-ribosyl)-5-[(5-phospho-beta-D-ribosylamino)methylideneamino]imidazole-4-carboxamide. Its pathway is amino-acid biosynthesis; L-histidine biosynthesis; L-histidine from 5-phospho-alpha-D-ribose 1-diphosphate: step 3/9. Its function is as follows. Catalyzes the hydrolysis of the adenine ring of phosphoribosyl-AMP. This Methanospirillum hungatei JF-1 (strain ATCC 27890 / DSM 864 / NBRC 100397 / JF-1) protein is Phosphoribosyl-AMP cyclohydrolase.